The following is a 432-amino-acid chain: MGKSVVILGAQWGDEGKGKIVDLLTDRVKYVVRYQGGHNAGHTLIINGEKTVLRLIPSGMLHPNVTCLIGNGVVVSPEALMKEMCELESRGIKVRERLLISEACPLILPYHVAMDHAREAALGKKAIGTTGRGIGPAYEDKVARRGLRVGDLFNKEAFAEKLKNILEYYNFQLVNYYKVEPVDYQKTLDDVMAIADVITGMVADITTILDTARKNGEHILFEGAQGTMLDIDHGTYPYVTSSNTTAGGVATGSGFGPRNLDYVLGIIKAYCTRVGGGPFTTELFDDVGAEIARKGNEFGAVTGRPRRCGWFDAVAIRRAIQLNSISGFCMTKLDVLDGFDEVKICVAYKMPNGEIVEYAPLAAKDWEGVEPIYETLPGWKENTFRITDVNKLPQNCINYIKRIEEVTGVPIDILSTGPDRVETMILRDPFAA.

GTP-binding positions include 13–19 and 41–43; these read GDEGKGK and GHT. The Proton acceptor role is filled by aspartate 14. Mg(2+)-binding residues include aspartate 14 and glycine 41. Residues 14–17, 39–42, threonine 130, arginine 144, glutamine 225, threonine 240, and arginine 304 contribute to the IMP site; these read DEGK and NAGH. The active-site Proton donor is histidine 42. 300-306 serves as a coordination point for substrate; it reads AVTGRPR. GTP contacts are provided by residues arginine 306, 332–334, and 415–417; these read KLD and STG.

It belongs to the adenylosuccinate synthetase family. As to quaternary structure, homodimer. Requires Mg(2+) as cofactor.

It localises to the cytoplasm. It carries out the reaction IMP + L-aspartate + GTP = N(6)-(1,2-dicarboxyethyl)-AMP + GDP + phosphate + 2 H(+). It functions in the pathway purine metabolism; AMP biosynthesis via de novo pathway; AMP from IMP: step 1/2. Its function is as follows. Plays an important role in the de novo pathway of purine nucleotide biosynthesis. Catalyzes the first committed step in the biosynthesis of AMP from IMP. This Haemophilus influenzae (strain PittEE) protein is Adenylosuccinate synthetase.